The sequence spans 237 residues: Orotidine 5'-phosphate decarboxylase (237 aa).

Substrate-binding positions include D11, K34, 61-70 (DLKLHDIPNT), T123, R185, Q194, G214, and R215. The Proton donor role is filled by K63.

It belongs to the OMP decarboxylase family. Type 1 subfamily. As to quaternary structure, homodimer.

It carries out the reaction orotidine 5'-phosphate + H(+) = UMP + CO2. It functions in the pathway pyrimidine metabolism; UMP biosynthesis via de novo pathway; UMP from orotate: step 2/2. Catalyzes the decarboxylation of orotidine 5'-monophosphate (OMP) to uridine 5'-monophosphate (UMP). In Ligilactobacillus salivarius (strain UCC118) (Lactobacillus salivarius), this protein is Orotidine 5'-phosphate decarboxylase.